Consider the following 468-residue polypeptide: Tripartite motif-containing protein 75 (468 aa).

An RING-type zinc finger spans residues 16 to 57 (CSICLDYLSDPVTIECGHNFCRSCIQQSWLDLQELFPCPVCR). The B box-type zinc finger occupies 92–133 (EETTLCEKHNQPLSVFCKEDLMVLCPLCTQPPDHQGHHVRPI). Residues C97, H100, C119, and H125 each coordinate Zn(2+). Residues 170 to 222 (LELREMVENQRQELSSEFEHLNQFLDREQQAVLSRLAEEEKDNQQKLSANITA) are a coiled coil. Residues 276 to 468 (CSFPPQYSAL…LRICTGTVCE (193 aa)) form the B30.2/SPRY domain.

It belongs to the TRIM/RBCC family.

The protein resides in the cytoplasm. It is found in the cytoskeleton. The protein localises to the spindle. Functionally, may play a role in female meiosis. The polypeptide is Tripartite motif-containing protein 75 (Homo sapiens (Human)).